Reading from the N-terminus, the 337-residue chain is UPF0284 protein AF_0276 (337 aa).

Belongs to the UPF0284 family.

This chain is UPF0284 protein AF_0276, found in Archaeoglobus fulgidus (strain ATCC 49558 / DSM 4304 / JCM 9628 / NBRC 100126 / VC-16).